The following is a 145-amino-acid chain: Large ribosomal subunit protein uL13 (145 aa).

The protein belongs to the universal ribosomal protein uL13 family. In terms of assembly, part of the 50S ribosomal subunit.

In terms of biological role, this protein is one of the early assembly proteins of the 50S ribosomal subunit, although it is not seen to bind rRNA by itself. It is important during the early stages of 50S assembly. The polypeptide is Large ribosomal subunit protein uL13 (Staphylococcus saprophyticus subsp. saprophyticus (strain ATCC 15305 / DSM 20229 / NCIMB 8711 / NCTC 7292 / S-41)).